Here is a 339-residue protein sequence, read N- to C-terminus: Phosphate acyltransferase (339 aa).

This sequence belongs to the PlsX family. In terms of assembly, homodimer. Probably interacts with PlsY.

The protein localises to the cytoplasm. It catalyses the reaction a fatty acyl-[ACP] + phosphate = an acyl phosphate + holo-[ACP]. It functions in the pathway lipid metabolism; phospholipid metabolism. Its function is as follows. Catalyzes the reversible formation of acyl-phosphate (acyl-PO(4)) from acyl-[acyl-carrier-protein] (acyl-ACP). This enzyme utilizes acyl-ACP as fatty acyl donor, but not acyl-CoA. The protein is Phosphate acyltransferase of Brachyspira hyodysenteriae (strain ATCC 49526 / WA1).